Reading from the N-terminus, the 240-residue chain is Inhibitor of growth protein 5 (240 aa).

Position 114 is an N6-acetyllysine (K114). Positions 116-165 are disordered; it reads EGSDFESSGGRGLKKGRGQKEKRGSRGRGRRTSEEDTPKKKKHKGGSEFT. S118 carries the phosphoserine modification. An Omega-N-methylarginine modification is found at R126. The segment at 186–235 adopts a PHD-type zinc-finger fold; that stretch reads PTYCLCHQVSYGEMIGCDNPDCPIEWFHFACVDLTTKPKGKWFCPRCVQE. Positions 189, 191, 202, 207, 213, 216, 229, and 232 each coordinate Zn(2+).

It belongs to the ING family. Component of the HBO1 complex composed of KAT7/HBO1, MEAF6, ING5, and one scaffold subunit: complexes containing BRPF scaffold (BRPF1, BRD1/BRPF2 or BRPF3) direct KAT7/HBO1 specificity towards H3K14ac, while complexes containing JADE scaffold (JADE1, JADE2 and JADE3) mediate acetylation of histone H4. Component of the MOZ/MORF complex composed at least of ING5, KAT6A, KAT6B, MEAF6 and one of BRPF1, BRD1/BRPF2 and BRPF3. Interacts with H3K4me3 and to a lesser extent with H3K4me2. Interacts with EP300 and p53/TP53. Interacts with INCA1. Down-regulated in bone marrow cells in acute myeloid leukemia patients as compared with normal bone marrow cells.

It is found in the nucleus. The protein localises to the chromosome. In terms of biological role, component of the HBO1 complex, which specifically mediates acetylation of histone H3 at 'Lys-14' (H3K14ac) and, to a lower extent, acetylation of histone H4. Component of the MOZ/MORF complex which has a histone H3 acetyltransferase activity. Through chromatin acetylation it may regulate DNA replication and may function as a transcriptional coactivator. Inhibits cell growth, induces a delay in S-phase progression and enhances Fas-induced apoptosis in an INCA1-dependent manner. The sequence is that of Inhibitor of growth protein 5 (ING5) from Homo sapiens (Human).